Here is a 128-residue protein sequence, read N- to C-terminus: MHQYELMVILDPEIDERTVAPSLDKFLNVVRNDGGTIDNVDIWGRRRLAYEINKKSEGIYAVVQLTATGDTTKELDRQLKLSEAVMRTKVLRADEAIAQVAAAQKRADEKAARKAAAAEKTVTEKVGV.

This sequence belongs to the bacterial ribosomal protein bS6 family.

Its function is as follows. Binds together with bS18 to 16S ribosomal RNA. This chain is Small ribosomal subunit protein bS6, found in Leifsonia xyli subsp. xyli (strain CTCB07).